Reading from the N-terminus, the 143-residue chain is Nucleoside diphosphate kinase (143 aa).

ATP-binding residues include lysine 11, phenylalanine 59, arginine 87, threonine 93, arginine 104, and asparagine 114. The active-site Pros-phosphohistidine intermediate is the histidine 117.

The protein belongs to the NDK family. Homotetramer. Mg(2+) serves as cofactor.

It localises to the cytoplasm. The enzyme catalyses a 2'-deoxyribonucleoside 5'-diphosphate + ATP = a 2'-deoxyribonucleoside 5'-triphosphate + ADP. It catalyses the reaction a ribonucleoside 5'-diphosphate + ATP = a ribonucleoside 5'-triphosphate + ADP. Functionally, major role in the synthesis of nucleoside triphosphates other than ATP. The ATP gamma phosphate is transferred to the NDP beta phosphate via a ping-pong mechanism, using a phosphorylated active-site intermediate. This chain is Nucleoside diphosphate kinase, found in Thioalkalivibrio sulfidiphilus (strain HL-EbGR7).